The following is a 502-amino-acid chain: 4,4'-diapophytoene desaturase (4,4'-diaponeurosporene-forming) (502 aa).

An FAD-binding site is contributed by 5–17 (VIGAGVTGLAAAA).

It belongs to the carotenoid/retinoid oxidoreductase family. CrtN subfamily.

It carries out the reaction 15-cis-4,4'-diapophytoene + 3 FAD + 3 H(+) = all-trans-4,4'-diaponeurosporene + 3 FADH2. Its pathway is carotenoid biosynthesis; staphyloxanthin biosynthesis; staphyloxanthin from farnesyl diphosphate: step 2/5. In terms of biological role, involved in the biosynthesis of the yellow-orange carotenoid staphyloxanthin, which plays a role in the virulence via its protective function against oxidative stress. Catalyzes three successive dehydrogenation reactions that lead to the introduction of three double bonds into 4,4'-diapophytoene (dehydrosqualene), with 4,4'-diapophytofluene and 4,4'-diapo-zeta-carotene as intermediates, and 4,4'-diaponeurosporene (the major deep-yellow pigment in staphylococci strains) as the end product. In Staphylococcus aureus (strain USA300), this protein is 4,4'-diapophytoene desaturase (4,4'-diaponeurosporene-forming).